A 240-amino-acid polypeptide reads, in one-letter code: Probable transcriptional regulatory protein SO_3401 (240 aa).

The protein belongs to the TACO1 family.

It is found in the cytoplasm. In Shewanella oneidensis (strain ATCC 700550 / JCM 31522 / CIP 106686 / LMG 19005 / NCIMB 14063 / MR-1), this protein is Probable transcriptional regulatory protein SO_3401.